The chain runs to 500 residues: Lysine--tRNA ligase (500 aa).

E410 and E417 together coordinate Mg(2+).

Belongs to the class-II aminoacyl-tRNA synthetase family. In terms of assembly, homodimer. The cofactor is Mg(2+).

The protein resides in the cytoplasm. It carries out the reaction tRNA(Lys) + L-lysine + ATP = L-lysyl-tRNA(Lys) + AMP + diphosphate. The chain is Lysine--tRNA ligase from Pseudomonas putida (strain W619).